The following is a 199-amino-acid chain: Neurotrophic factor BDNF precursor form (199 aa).

Positions 1–23 (GQGSLAYPGLRTQGNLETLSGPN) are disordered. A propeptide spanning residues 1–100 (GQGSLAYPGL…AANMSMRVRR (100 aa)) is cleaved from the precursor. A compositionally biased stretch (polar residues) spans 12–23 (TQGNLETLSGPN). Asn-93 carries an N-linked (GlcNAc...) asparagine glycan. A disulfide bond links Cys-113 and Cys-180.

It belongs to the NGF-beta family.

The protein resides in the secreted. Its function is as follows. Promotes the survival of neuronal populations that are all located either in the central nervous system or directly connected to it. This is Neurotrophic factor BDNF precursor form (BDNF) from Eunectes notaeus (Yellow anaconda).